Reading from the N-terminus, the 187-residue chain is Ribosome maturation factor RimM (187 aa).

A PRC barrel domain is found at Asp94–Leu168. The segment at Gly167–Asp187 is disordered.

The protein belongs to the RimM family. In terms of assembly, binds ribosomal protein uS19.

It is found in the cytoplasm. Its function is as follows. An accessory protein needed during the final step in the assembly of 30S ribosomal subunit, possibly for assembly of the head region. Essential for efficient processing of 16S rRNA. May be needed both before and after RbfA during the maturation of 16S rRNA. It has affinity for free ribosomal 30S subunits but not for 70S ribosomes. In Jannaschia sp. (strain CCS1), this protein is Ribosome maturation factor RimM.